Consider the following 76-residue polypeptide: Defensin-like protein 155 (76 aa).

The signal sequence occupies residues 1–27 (MAKISCSYLLILMLALSVFSVVEKAKG). 4 disulfide bridges follow: C31-C76, C40-C59, C45-C70, and C49-C72.

It belongs to the DEFL family.

It localises to the secreted. In Arabidopsis thaliana (Mouse-ear cress), this protein is Defensin-like protein 155 (LCR36).